The following is a 353-amino-acid chain: Quinolinate synthase (353 aa).

Iminosuccinate is bound by residues His-47 and Ser-68. Cys-113 serves as a coordination point for [4Fe-4S] cluster. Iminosuccinate is bound by residues 139–141 (YAN) and Ser-156. Position 200 (Cys-200) interacts with [4Fe-4S] cluster. Residues 226–228 (HPE) and Thr-243 contribute to the iminosuccinate site. [4Fe-4S] cluster is bound at residue Cys-297.

The protein belongs to the quinolinate synthase family. Type 1 subfamily. Requires [4Fe-4S] cluster as cofactor.

It localises to the cytoplasm. It carries out the reaction iminosuccinate + dihydroxyacetone phosphate = quinolinate + phosphate + 2 H2O + H(+). It functions in the pathway cofactor biosynthesis; NAD(+) biosynthesis; quinolinate from iminoaspartate: step 1/1. Its function is as follows. Catalyzes the condensation of iminoaspartate with dihydroxyacetone phosphate to form quinolinate. This is Quinolinate synthase from Yersinia pestis bv. Antiqua (strain Nepal516).